The sequence spans 351 residues: 3-dehydroquinate synthase (351 aa).

Residues D60 to K65, G94 to D98, T118 to T119, K131, K140, and F158 to T161 each bind NAD(+). Zn(2+)-binding residues include E173, H239, and H256.

This sequence belongs to the sugar phosphate cyclases superfamily. Dehydroquinate synthase family. The cofactor is Co(2+). Zn(2+) is required as a cofactor. NAD(+) serves as cofactor.

It is found in the cytoplasm. It catalyses the reaction 7-phospho-2-dehydro-3-deoxy-D-arabino-heptonate = 3-dehydroquinate + phosphate. The protein operates within metabolic intermediate biosynthesis; chorismate biosynthesis; chorismate from D-erythrose 4-phosphate and phosphoenolpyruvate: step 2/7. Catalyzes the conversion of 3-deoxy-D-arabino-heptulosonate 7-phosphate (DAHP) to dehydroquinate (DHQ). This is 3-dehydroquinate synthase from Campylobacter jejuni subsp. jejuni serotype O:6 (strain 81116 / NCTC 11828).